A 170-amino-acid polypeptide reads, in one-letter code: Large ribosomal subunit protein uL10 (170 aa).

The protein belongs to the universal ribosomal protein uL10 family. Part of the ribosomal stalk of the 50S ribosomal subunit. The N-terminus interacts with L11 and the large rRNA to form the base of the stalk. The C-terminus forms an elongated spine to which L12 dimers bind in a sequential fashion forming a multimeric L10(L12)X complex.

Forms part of the ribosomal stalk, playing a central role in the interaction of the ribosome with GTP-bound translation factors. This Novosphingobium aromaticivorans (strain ATCC 700278 / DSM 12444 / CCUG 56034 / CIP 105152 / NBRC 16084 / F199) protein is Large ribosomal subunit protein uL10.